Reading from the N-terminus, the 361-residue chain is Phosphoserine aminotransferase (361 aa).

Position 43 (Arg43) interacts with L-glutamate. Residues 77 to 78, Trp103, Thr152, Asp172, and Gln195 contribute to the pyridoxal 5'-phosphate site; that span reads AS. Lys196 is modified (N6-(pyridoxal phosphate)lysine). 237 to 238 is a pyridoxal 5'-phosphate binding site; the sequence is NT.

The protein belongs to the class-V pyridoxal-phosphate-dependent aminotransferase family. SerC subfamily. Homodimer. Requires pyridoxal 5'-phosphate as cofactor.

Its subcellular location is the cytoplasm. The catalysed reaction is O-phospho-L-serine + 2-oxoglutarate = 3-phosphooxypyruvate + L-glutamate. It carries out the reaction 4-(phosphooxy)-L-threonine + 2-oxoglutarate = (R)-3-hydroxy-2-oxo-4-phosphooxybutanoate + L-glutamate. It participates in amino-acid biosynthesis; L-serine biosynthesis; L-serine from 3-phospho-D-glycerate: step 2/3. Its pathway is cofactor biosynthesis; pyridoxine 5'-phosphate biosynthesis; pyridoxine 5'-phosphate from D-erythrose 4-phosphate: step 3/5. Catalyzes the reversible conversion of 3-phosphohydroxypyruvate to phosphoserine and of 3-hydroxy-2-oxo-4-phosphonooxybutanoate to phosphohydroxythreonine. The chain is Phosphoserine aminotransferase from Desulfatibacillum aliphaticivorans.